The primary structure comprises 502 residues: Reduced meiotic recombination protein C1442.04c (502 aa).

Residues Ser-328, Ser-330, and Ser-331 each carry the phosphoserine modification. Disordered stretches follow at residues 353-391, 420-440, and 454-502; these read NDLN…LRDN, GSLN…ENVD, and ESAF…PSDD. The span at 367–378 shows a compositional bias: acidic residues; that stretch reads DGSEIITLDEND. Polar residues-rich tracts occupy residues 420 to 436 and 462 to 477; these read GSLN…TNDG and GTIN…TTDT.

The protein belongs to the RMR1 family.

Its subcellular location is the cytoplasm. The protein localises to the nucleus. Its function is as follows. Required for normal levels of gene conversion events during meiosis. This is Reduced meiotic recombination protein C1442.04c from Schizosaccharomyces pombe (strain 972 / ATCC 24843) (Fission yeast).